The sequence spans 326 residues: Chitinase 12 (326 aa).

A signal peptide spans 1 to 21 (MRALAVVAMVATAFLAAAVHA). The region spanning 22 to 62 (EQCGSQAGGAVCPNCLCCSQFGWCGSTSDYCGAGCQSQCSA) is the Chitin-binding type-1 domain. Cystine bridges form between cysteine 24–cysteine 39, cysteine 33–cysteine 45, cysteine 36–cysteine 65, cysteine 38–cysteine 52, cysteine 56–cysteine 60, cysteine 102–cysteine 165, cysteine 179–cysteine 187, and cysteine 286–cysteine 318. Catalysis depends on glutamate 147, which acts as the Proton donor.

It belongs to the glycosyl hydrolase 19 family. Chitinase class I subfamily. In terms of tissue distribution, expressed in meristems and at lower levels in roots and sheaths.

It carries out the reaction Random endo-hydrolysis of N-acetyl-beta-D-glucosaminide (1-&gt;4)-beta-linkages in chitin and chitodextrins.. Functionally, hydrolyzes chitin and plays a role in defense against fungal pathogens containing chitin. Its overexpression confers enhanced resistance to sheath blight pathogen (R.solani). The polypeptide is Chitinase 12 (Cht12) (Oryza sativa subsp. japonica (Rice)).